Consider the following 273-residue polypeptide: MLGYLAAAALCLAAVLLMRLDHLPLVDIPGLGYIFPQQCELSEGRLMSKEELSVYDGGPGSSGIYLAILGQVFDVHKGSKHYGPGGSYSFFAGKDASRAYMTGDFTEKGLVDDVTELSPLQMLHLHNWLSFYQQNYITIGKLTGRFYDESGNPTKALEDALKVIDIGLKLKEEREEENKQFPPCNSEWSSESKRVWCSKNSGGIQRDWVGVPRKMYTAGTNGYRCVCVRNFGPPSEQPDSTEHNDRGDLDNPMLHEYEDCNPLFEWCFLKNGT.

Positions 1–22 (MLGYLAAAALCLAAVLLMRLDH) are cleaved as a signal peptide. The Cytochrome b5 heme-binding domain occupies 44–143 (GRLMSKEELS…QNYITIGKLT (100 aa)).

It belongs to the cytochrome b5 family. MAPR subfamily.

The protein resides in the secreted. Its function is as follows. Heme-binding protein which promotes neuronal but not astrocyte differentiation. This Xenopus tropicalis (Western clawed frog) protein is Neuferricin (cyb5d2).